Consider the following 103-residue polypeptide: MYAVVKTGGKQYKVAAGEKLKVEQIPADVGAEITLDQVLAVGAGDQLKVGAPLVSGAAVKATVISHGRHDKVKIFKMRRRKHYQKHQGHRQNYTELRIDSIVA.

The protein belongs to the bacterial ribosomal protein bL21 family. Part of the 50S ribosomal subunit. Contacts protein L20.

Functionally, this protein binds to 23S rRNA in the presence of protein L20. This is Large ribosomal subunit protein bL21 from Ralstonia nicotianae (strain ATCC BAA-1114 / GMI1000) (Ralstonia solanacearum).